A 424-amino-acid polypeptide reads, in one-letter code: Probable threonylcarbamoyladenosine tRNA methylthiotransferase (424 aa).

One can recognise an MTTase N-terminal domain in the interval 4 to 115 (IRVYIETFGC…APQAVRAASN (112 aa)). Residues Cys-13, Cys-48, Cys-79, Cys-150, Cys-154, and Cys-157 each coordinate [4Fe-4S] cluster. Residues 136–365 (RSNPLIHIIP…EELKMRITEE (230 aa)) enclose the Radical SAM core domain. Residues 368 to 424 (RRLVGSFQEILVVERGRKGGFIGRTGSYIPVVTETGEPGSFRRVRIRDATGTYLLAD) form the TRAM domain.

This sequence belongs to the methylthiotransferase family. CDKAL1 subfamily. The cofactor is [4Fe-4S] cluster.

The catalysed reaction is N(6)-L-threonylcarbamoyladenosine(37) in tRNA + (sulfur carrier)-SH + AH2 + 2 S-adenosyl-L-methionine = 2-methylsulfanyl-N(6)-L-threonylcarbamoyladenosine(37) in tRNA + (sulfur carrier)-H + 5'-deoxyadenosine + L-methionine + A + S-adenosyl-L-homocysteine + 2 H(+). Its function is as follows. Catalyzes the methylthiolation of N6-threonylcarbamoyladenosine (t(6)A), leading to the formation of 2-methylthio-N6-threonylcarbamoyladenosine (ms(2)t(6)A) at position 37 in tRNAs that read codons beginning with adenine. This Methanothermobacter thermautotrophicus (strain ATCC 29096 / DSM 1053 / JCM 10044 / NBRC 100330 / Delta H) (Methanobacterium thermoautotrophicum) protein is Probable threonylcarbamoyladenosine tRNA methylthiotransferase.